The primary structure comprises 594 residues: MATSEPAESDAVRAKEWEQLEPVQRDVYKDTKLENCSNPASMGNQDPKQDIVSVLEEEEPSSGKGKKASPSSLKKIARPKTAGTSAKLQQDDEHREEKQKSQSKLTKEVTLRKKSSNSKKSSEYGLLENKSLHSKHTPSEKKLLKSSSRGKNSNQNSDSLKKKPDTANDHRKSLSHSASDVNKDEIPTRKKCDKLPNNKLSDKGDKNQTSKKCEKVCRHSASHTKEDKIQTGEKRKSHCRTPSKPEKAPGSGKPYECNHCGKVLSHKQGLLDHQRTHTGEKPYECNECGIAFSQKSHLVVHQRTHTGEKPYECEQCGKAHGHKHALTDHLRIHTGEKPYKCNECGKTFRHSSNLMQHLRSHTGEKPYECKECGKSFRYNSSLTEHVRTHTGEIPYECNECGKAFKYGSSLTKHMRIHTGEKPFECNECGKTFSKKSHLVIHQRTHTKEKPYKCDECGKAFGHSSSLTYHMRTHTGDCPFECNQCGKAFKQIEGLTQHQRVHTGEKPYECVECGKAFSQKSHLIVHQRTHTGEKPFECYECGKAFNAKSQLVIHQRSHTGEKPYECIECGKAFKQNASLTKHMKIHSEEQSEEED.

The segment at 1 to 253 is disordered; the sequence is MATSEPAESD…KPEKAPGSGK (253 aa). At Thr-3 the chain carries Phosphothreonine. Residues 3–74 form the KRAB domain; the sequence is TSEPAESDAV…GKKASPSSLK (72 aa). Ser-9 bears the Phosphoserine mark. Positions 10–33 are enriched in basic and acidic residues; sequence DAVRAKEWEQLEPVQRDVYKDTKL. Residues 34-46 show a composition bias toward polar residues; it reads ENCSNPASMGNQD. Positions 89–111 are enriched in basic and acidic residues; it reads QQDDEHREEKQKSQSKLTKEVTL. A compositionally biased stretch (polar residues) spans 145 to 158; it reads KSSSRGKNSNQNSD. Composition is skewed to basic and acidic residues over residues 159 to 172 and 181 to 234; these read SLKK…DHRK and VNKD…TGEK. 12 C2H2-type zinc fingers span residues 255-277, 283-305, 311-324, 339-361, 367-389, 395-417, 423-445, 451-473, 479-501, 507-529, 535-557, and 563-585; these read YECN…QRTH, YECE…GHKH, YKCN…LRSH, YECK…VRTH, YECN…MRIH, FECN…QRTH, YKCD…MRTH, FECN…QRVH, YECV…QRTH, FECY…QRSH, and YECI…MKIH.

The protein belongs to the krueppel C2H2-type zinc-finger protein family. As to expression, expressed in testis and brain.

It localises to the nucleus. May have a role in regulating spermiogenesis. The polypeptide is Zinc finger protein 37 (Zfp37) (Mus musculus (Mouse)).